A 156-amino-acid polypeptide reads, in one-letter code: Arginine repressor (156 aa).

It belongs to the ArgR family.

The protein resides in the cytoplasm. It functions in the pathway amino-acid biosynthesis; L-arginine biosynthesis [regulation]. Its function is as follows. Regulates arginine biosynthesis genes. This chain is Arginine repressor, found in Salmonella paratyphi C (strain RKS4594).